The sequence spans 372 residues: Cell division protein FtsZ 1 (372 aa).

Residues 51 to 55 (GAGCN), 138 to 140 (GTG), E169, R173, and D216 contribute to the GTP site. A compositionally biased stretch (acidic residues) spans 350–360 (PEEETPLETPE). Residues 350–372 (PEEETPLETPEESPSIEISIPEL) form a disordered region. Positions 361-372 (ESPSIEISIPEL) are enriched in low complexity.

Belongs to the FtsZ family. Homodimer. Polymerizes to form a dynamic ring structure in a strictly GTP-dependent manner. Interacts directly with several other division proteins.

The protein localises to the cytoplasm. Functionally, essential cell division protein that forms a contractile ring structure (Z ring) at the future cell division site. The regulation of the ring assembly controls the timing and the location of cell division. One of the functions of the FtsZ ring is to recruit other cell division proteins to the septum to produce a new cell wall between the dividing cells. Binds GTP and shows GTPase activity. This chain is Cell division protein FtsZ 1, found in Pyrococcus furiosus (strain ATCC 43587 / DSM 3638 / JCM 8422 / Vc1).